A 317-amino-acid chain; its full sequence is Tenomodulin (317 aa).

Residues 1–30 (MAKNPPENCEGCHILNAEALKSKKICKSLK) are Cytoplasmic-facing. Residues 31–50 (ICGLVFGILALTLIVLFWGS) traverse the membrane as a helical; Signal-anchor for type II membrane protein segment. At 51–317 (KHFWPEVSKK…WWVARMLGRV (267 aa)) the chain is on the extracellular side. Residues 93–186 (GNGTDETLEV…ICDNVTMYWI (94 aa)) enclose the BRICHOS domain. An N-linked (GlcNAc...) asparagine glycan is attached at Asn94. A disulfide bridge links Cys120 with Cys178. Asn180 carries an N-linked (GlcNAc...) asparagine glycan. Ser239 carries the post-translational modification Phosphoserine.

The protein belongs to the chondromodulin-1 family. In terms of tissue distribution, widely expressed with highest expression in tendons and ligaments, in the diaphragm, eye and skeletal muscle. Expressed in neuronal cells of all brain regions. Very low expression, if any, in glial cells.

It localises to the membrane. The protein resides in the nucleus envelope. In terms of biological role, may be an angiogenesis inhibitor. This chain is Tenomodulin (Tnmd), found in Mus musculus (Mouse).